The primary structure comprises 346 residues: Phosphoribosylformylglycinamidine cyclo-ligase (346 aa).

This sequence belongs to the AIR synthase family.

Its subcellular location is the cytoplasm. It carries out the reaction 2-formamido-N(1)-(5-O-phospho-beta-D-ribosyl)acetamidine + ATP = 5-amino-1-(5-phospho-beta-D-ribosyl)imidazole + ADP + phosphate + H(+). The protein operates within purine metabolism; IMP biosynthesis via de novo pathway; 5-amino-1-(5-phospho-D-ribosyl)imidazole from N(2)-formyl-N(1)-(5-phospho-D-ribosyl)glycinamide: step 2/2. The chain is Phosphoribosylformylglycinamidine cyclo-ligase from Synechococcus sp. (strain CC9311).